Here is a 350-residue protein sequence, read N- to C-terminus: Probable dual-specificity RNA methyltransferase RlmN (350 aa).

Glu-91 (proton acceptor) is an active-site residue. One can recognise a Radical SAM core domain in the interval Tyr-97–Asp-327. Cysteines 104 and 332 form a disulfide. Residues Cys-111, Cys-115, and Cys-118 each contribute to the [4Fe-4S] cluster site. S-adenosyl-L-methionine is bound by residues Gly-158–Glu-159, Ser-190, Ser-213–His-215, and Asn-289. Cys-332 functions as the S-methylcysteine intermediate in the catalytic mechanism.

It belongs to the radical SAM superfamily. RlmN family. The cofactor is [4Fe-4S] cluster.

The protein resides in the cytoplasm. The enzyme catalyses adenosine(2503) in 23S rRNA + 2 reduced [2Fe-2S]-[ferredoxin] + 2 S-adenosyl-L-methionine = 2-methyladenosine(2503) in 23S rRNA + 5'-deoxyadenosine + L-methionine + 2 oxidized [2Fe-2S]-[ferredoxin] + S-adenosyl-L-homocysteine. It catalyses the reaction adenosine(37) in tRNA + 2 reduced [2Fe-2S]-[ferredoxin] + 2 S-adenosyl-L-methionine = 2-methyladenosine(37) in tRNA + 5'-deoxyadenosine + L-methionine + 2 oxidized [2Fe-2S]-[ferredoxin] + S-adenosyl-L-homocysteine. In terms of biological role, specifically methylates position 2 of adenine 2503 in 23S rRNA and position 2 of adenine 37 in tRNAs. This chain is Probable dual-specificity RNA methyltransferase RlmN, found in Lachnospira eligens (strain ATCC 27750 / DSM 3376 / VPI C15-48 / C15-B4) (Eubacterium eligens).